The sequence spans 699 residues: MAACEGRRSGALGSSQSDFLTPPVGGAPWAVATTVVMYPPPPPPPHRDFISVTLSFGENYDNSKSWRRRSCWRKWKQLSRLQRNMILFLLAFLLFCGLLFYINLADHWKALAFRLEEEQKMRPEIAGLKPANPPVLPAPQKADTDPENLPEISSQKTQRHIQRGPPHLQIRPPSQDLKDGTQEEATKRQEAPVDPRPEGDPQRTVISWRGAVIEPEQGTELPSRRAEVPTKPPLPPARTQGTPVHLNYRQKGVIDVFLHAWKGYRKFAWGHDELKPVSRSFSEWFGLGLTLIDALDTMWILGLRKEFEEARKWVSKKLHFEKDVDVNLFESTIRILGGLLSAYHLSGDSLFLRKAEDFGNRLMPAFRTPSKIPYSDVNIGTGVAHPPRWTSDSTVAEVTSIQLEFRELSRLTGDKKFQEAVEKVTQHIHGLSGKKDGLVPMFINTHSGLFTHLGVFTLGARADSYYEYLLKQWIQGGKQETQLLEDYVEAIEGVRTHLLRHSEPSKLTFVGELAHGRFSAKMDHLVCFLPGTLALGVYHGLPASHMELAQELMETCYQMNRQMETGLSPEIVHFNLYPQPGRRDVEVKPADRHNLLRPETVESLFYLYRVTGDRKYQDWGWEILQSFSRFTRVPSGGYSSINNVQDPQKPEPRDKMESFFLGETLKYLFLLFSDDPNLLSLDAYVFNTEAHPLPIWTPA.

Residues 1–84 (MAACEGRRSG…WKQLSRLQRN (84 aa)) lie on the Cytoplasmic side of the membrane. A helical; Signal-anchor for type II membrane protein membrane pass occupies residues 85–105 (MILFLLAFLLFCGLLFYINLA). The Lumenal portion of the chain corresponds to 106-699 (DHWKALAFRL…AHPLPIWTPA (594 aa)). Residues 125–243 (IAGLKPANPP…LPPARTQGTP (119 aa)) form a disordered region. The span at 176 to 201 (DLKDGTQEEATKRQEAPVDPRPEGDP) shows a compositional bias: basic and acidic residues. The active-site Proton donor is the Glu-330. Asp-463 is an active-site residue. Cysteines 527 and 556 form a disulfide. Residue Glu-570 is the Proton donor of the active site. The active site involves Glu-599. Thr-688 serves as a coordination point for Ca(2+).

This sequence belongs to the glycosyl hydrolase 47 family. Ca(2+) serves as cofactor. In terms of tissue distribution, widely expressed.

It is found in the endoplasmic reticulum membrane. The catalysed reaction is N(4)-(alpha-D-Man-(1-&gt;2)-alpha-D-Man-(1-&gt;2)-alpha-D-Man-(1-&gt;3)-[alpha-D-Man-(1-&gt;2)-alpha-D-Man-(1-&gt;3)-[alpha-D-Man-(1-&gt;2)-alpha-D-Man-(1-&gt;6)]-alpha-D-Man-(1-&gt;6)]-beta-D-Man-(1-&gt;4)-beta-D-GlcNAc-(1-&gt;4)-beta-D-GlcNAc)-L-asparaginyl-[protein] (N-glucan mannose isomer 9A1,2,3B1,2,3) + 4 H2O = N(4)-(alpha-D-Man-(1-&gt;3)-[alpha-D-Man-(1-&gt;3)-[alpha-D-Man-(1-&gt;6)]-alpha-D-Man-(1-&gt;6)]-beta-D-Man-(1-&gt;4)-beta-D-GlcNAc-(1-&gt;4)-beta-D-GlcNAc)-L-asparaginyl-[protein] (N-glucan mannose isomer 5A1,2) + 4 beta-D-mannose. The enzyme catalyses N(4)-(alpha-D-Man-(1-&gt;2)-alpha-D-Man-(1-&gt;2)-alpha-D-Man-(1-&gt;3)-[alpha-D-Man-(1-&gt;3)-[alpha-D-Man-(1-&gt;2)-alpha-D-Man-(1-&gt;6)]-alpha-D-Man-(1-&gt;6)]-beta-D-Man-(1-&gt;4)-beta-D-GlcNAc-(1-&gt;4)-beta-D-GlcNAc)-L-asparaginyl-[protein] (N-glucan mannose isomer 8A1,2,3B1,3) + 3 H2O = N(4)-(alpha-D-Man-(1-&gt;3)-[alpha-D-Man-(1-&gt;3)-[alpha-D-Man-(1-&gt;6)]-alpha-D-Man-(1-&gt;6)]-beta-D-Man-(1-&gt;4)-beta-D-GlcNAc-(1-&gt;4)-beta-D-GlcNAc)-L-asparaginyl-[protein] (N-glucan mannose isomer 5A1,2) + 3 beta-D-mannose. The protein operates within protein modification; protein glycosylation. Its activity is regulated as follows. Inhibited by both 1-deoxymannojirimycin (dMNJ) and kifunensine. Involved in glycoprotein quality control targeting of misfolded glycoproteins for degradation. It primarily trims a single alpha-1,2-linked mannose residue from Man(9)GlcNAc(2) to produce Man(8)GlcNAc(2), but at high enzyme concentrations, as found in the ER quality control compartment (ERQC), it further trims the carbohydrates to Man(5-6)GlcNAc(2). This Homo sapiens (Human) protein is Endoplasmic reticulum mannosyl-oligosaccharide 1,2-alpha-mannosidase (MAN1B1).